Here is a 500-residue protein sequence, read N- to C-terminus: Lysine--tRNA ligase (500 aa).

Mg(2+) is bound by residues Glu410 and Glu417.

It belongs to the class-II aminoacyl-tRNA synthetase family. Homodimer. The cofactor is Mg(2+).

The protein localises to the cytoplasm. The enzyme catalyses tRNA(Lys) + L-lysine + ATP = L-lysyl-tRNA(Lys) + AMP + diphosphate. The polypeptide is Lysine--tRNA ligase (Shewanella sp. (strain ANA-3)).